A 333-amino-acid chain; its full sequence is Glyceraldehyde-3-phosphate dehydrogenase (333 aa).

NAD(+) contacts are provided by residues 11–12, aspartate 35, methionine 79, and serine 121; that span reads RI. D-glyceraldehyde 3-phosphate-binding positions include 150-152, threonine 181, 210-211, and arginine 233; these read SCT and TG. Cysteine 151 acts as the Nucleophile in catalysis. An NAD(+)-binding site is contributed by asparagine 315.

Belongs to the glyceraldehyde-3-phosphate dehydrogenase family. In terms of assembly, homotetramer.

Its subcellular location is the cytoplasm. It catalyses the reaction D-glyceraldehyde 3-phosphate + phosphate + NAD(+) = (2R)-3-phospho-glyceroyl phosphate + NADH + H(+). The protein operates within carbohydrate degradation; glycolysis; pyruvate from D-glyceraldehyde 3-phosphate: step 1/5. Its function is as follows. Catalyzes the oxidative phosphorylation of glyceraldehyde 3-phosphate (G3P) to 1,3-bisphosphoglycerate (BPG) using the cofactor NAD. The first reaction step involves the formation of a hemiacetal intermediate between G3P and a cysteine residue, and this hemiacetal intermediate is then oxidized to a thioester, with concomitant reduction of NAD to NADH. The reduced NADH is then exchanged with the second NAD, and the thioester is attacked by a nucleophilic inorganic phosphate to produce BPG. In Bacteroides fragilis (strain YCH46), this protein is Glyceraldehyde-3-phosphate dehydrogenase (gap).